The chain runs to 77 residues: Translation initiation factor IF-1, chloroplastic (77 aa).

Residues 1-71 (MKEQKWVHEG…TRGRIIYRLR (71 aa)) enclose the S1-like domain.

The protein belongs to the IF-1 family. In terms of assembly, component of the 30S ribosomal translation pre-initiation complex which assembles on the 30S ribosome in the order IF-2 and IF-3, IF-1 and N-formylmethionyl-tRNA(fMet); mRNA recruitment can occur at any time during PIC assembly.

Its subcellular location is the plastid. It localises to the chloroplast. Functionally, one of the essential components for the initiation of protein synthesis. Stabilizes the binding of IF-2 and IF-3 on the 30S subunit to which N-formylmethionyl-tRNA(fMet) subsequently binds. Helps modulate mRNA selection, yielding the 30S pre-initiation complex (PIC). Upon addition of the 50S ribosomal subunit IF-1, IF-2 and IF-3 are released leaving the mature 70S translation initiation complex. The sequence is that of Translation initiation factor IF-1, chloroplastic from Cercidiphyllum japonicum (Katsura tree).